The sequence spans 146 residues: Cyanate hydratase (146 aa).

Active-site residues include arginine 87, glutamate 90, and serine 113.

This sequence belongs to the cyanase family.

The enzyme catalyses cyanate + hydrogencarbonate + 3 H(+) = NH4(+) + 2 CO2. Catalyzes the reaction of cyanate with bicarbonate to produce ammonia and carbon dioxide. This is Cyanate hydratase from Nostoc sp. (strain PCC 7120 / SAG 25.82 / UTEX 2576).